The following is a 173-amino-acid chain: Pyrimidine operon regulatory protein (173 aa).

Substrate-binding positions include 40 to 41 (TR), 97 to 105 (DDVLYTGRT), and arginine 130. A PRPP-binding motif is present at residues 93–105 (VILVDDVLYTGRT).

Belongs to the purine/pyrimidine phosphoribosyltransferase family. PyrR subfamily.

Functionally, regulates transcriptional attenuation of the pyrimidine nucleotide (pyr) operon in response to exogenous pyrimidines, probably by binding to specific sites on pyr mRNA. This probably disrupts an antiterminator hairpin in the RNA and favors formation of a downstream transcription terminator, leading to a reduced expression of downstream genes. The polypeptide is Pyrimidine operon regulatory protein (Lactococcus lactis subsp. lactis (strain IL1403) (Streptococcus lactis)).